Here is a 169-residue protein sequence, read N- to C-terminus: Putative hydrolase 111R (169 aa).

The 124-residue stretch at 46-169 (FEKRKAGVFV…QKILMALSCN (124 aa)) folds into the Nudix hydrolase domain. The short motif at 76–98 (GHMEAYDHSPKTCAERELKEETG) is the Nudix box element. Mg(2+) is bound by residues glutamate 92, glutamate 96, and aspartate 138.

The protein belongs to the Nudix hydrolase family. The cofactor is Mg(2+). Mn(2+) is required as a cofactor.

This is Putative hydrolase 111R from Aedes vexans (Inland floodwater mosquito).